We begin with the raw amino-acid sequence, 173 residues long: 5-hydroxymethyl-dUMP N-hydrolase (173 aa).

Alanine 2 is modified (N-acetylalanine). Glycine 16 provides a ligand contact to 5-hydroxymethyl-dUMP. Residue serine 17 is modified to Phosphoserine. The 5-hydroxymethyl-dUMP site is built by isoleucine 18, arginine 19, glycine 20, serine 87, glycine 89, and glutamate 93. Serine 87 is subject to Phosphoserine. Phosphoserine occurs at positions 112, 117, 127, and 158. Serine 117 contributes to the 5-hydroxymethyl-dUMP binding site.

It belongs to the 2'-deoxynucleoside 5'-phosphate N-hydrolase 1 family. As to quaternary structure, monomer and homodimer.

The protein localises to the cytoplasm. It localises to the nucleus. The enzyme catalyses 5-hydroxymethyl-dUMP + H2O = 5-hydroxymethyluracil + 2-deoxy-D-ribose 5-phosphate. Part of a nucleotide salvage pathway that eliminates epigenetically modified 5-hydroxymethyl-dCMP (hmdCMP) in a two-step process entailing deamination to cytotoxic 5-hydroxymethyl-dUMP (hmdUMP), followed by its hydrolysis into 5-hydroxymethyluracil (hmU) and 2-deoxy-D-ribose 5-phosphate (deoxyribosephosphate). Catalyzes the second step in that pathway, the hydrolysis of the N-glycosidic bond in hmdUMP, degrading this cytotoxic nucleotide to avoid its genomic integration. This chain is 5-hydroxymethyl-dUMP N-hydrolase, found in Mus musculus (Mouse).